The primary structure comprises 126 residues: Small ribosomal subunit protein eS6 (126 aa).

The protein belongs to the eukaryotic ribosomal protein eS6 family.

This chain is Small ribosomal subunit protein eS6, found in Thermococcus sibiricus (strain DSM 12597 / MM 739).